The sequence spans 460 residues: MASSQKLWGGRFTGATDPLMTAYNESIHYDKRMFNADIDGSKAYAKALEQRGIISADELDKMLDGLEAVRDEWKTNKFTLQPSDEDIHTANERRLGEIIGTGIAGKLHTGRSRNDQVTTDMRLWLRDELDIIQKSLVGLLQVFVARAESDLDIIMPGYTHLQRAQPIRWSHFLLSHAFSILNDLDRLKQIYSRVNRLPLGAGALAGNPFAVDRKFLQKELGFEGVIMNSMNAVADRDYVIEFMFWASMVMTHISRLAEDLIIYSTSEFNFVTLSDAYSTGSSIMPQKKNPDSLELLRGKSGRVFGNMMGFMVSVKGIPSTYNKDLQEDKEPLFDSSKTVLDSIQILTGVLSTLTVNPENIAKSLTADMLATDLAEYLVRKGVPFRETHHISGSAVRMAEERNTTIDKLSVEDFKSLHPLYEEDVADVFNYESSVEKRCAIGGTAKSCVLEQIQTIKKALE.

Residues Ser26, Asn114, and Thr159 each contribute to the 2-(N(omega)-L-arginino)succinate site. His160 functions as the Proton acceptor in the catalytic mechanism. Catalysis depends on Ser281, which acts as the Proton donor. Residues Asn289, Tyr321, Gln326, and Lys329 each contribute to the 2-(N(omega)-L-arginino)succinate site.

It belongs to the lyase 1 family. Argininosuccinate lyase subfamily. Homotetramer.

The catalysed reaction is 2-(N(omega)-L-arginino)succinate = fumarate + L-arginine. It functions in the pathway amino-acid biosynthesis; L-arginine biosynthesis; L-arginine from L-ornithine and carbamoyl phosphate: step 3/3. This is Probable argininosuccinate lyase (argx) from Schizosaccharomyces pombe (strain 972 / ATCC 24843) (Fission yeast).